Here is a 363-residue protein sequence, read N- to C-terminus: SWIRM domain-containing protein YOR338W (363 aa).

2 disordered regions span residues 1–22 (MLDN…GGIN) and 186–208 (LYED…VPVR). Over residues 186 to 196 (LYEDDGNRSEN) the composition is skewed to basic and acidic residues. In terms of domain architecture, SWIRM spans 266-363 (LKVEWKGSPM…LQDKHFEKYL (98 aa)).

The protein is SWIRM domain-containing protein YOR338W of Saccharomyces cerevisiae (strain ATCC 204508 / S288c) (Baker's yeast).